We begin with the raw amino-acid sequence, 518 residues long: 3-octaprenyl-4-hydroxybenzoate carboxy-lyase (518 aa).

N177 is a Mn(2+) binding site. Residues 180–182 (IYR), 194–196 (RWL), and 199–200 (RG) each bind prenylated FMN. E243 is a binding site for Mn(2+). The Proton donor role is filled by D318.

Belongs to the UbiD family. In terms of assembly, homohexamer. Prenylated FMN serves as cofactor. It depends on Mn(2+) as a cofactor.

Its subcellular location is the cell membrane. It catalyses the reaction a 4-hydroxy-3-(all-trans-polyprenyl)benzoate + H(+) = a 2-(all-trans-polyprenyl)phenol + CO2. The protein operates within cofactor biosynthesis; ubiquinone biosynthesis. Its function is as follows. Catalyzes the decarboxylation of 3-octaprenyl-4-hydroxy benzoate to 2-octaprenylphenol, an intermediate step in ubiquinone biosynthesis. The chain is 3-octaprenyl-4-hydroxybenzoate carboxy-lyase from Burkholderia lata (strain ATCC 17760 / DSM 23089 / LMG 22485 / NCIMB 9086 / R18194 / 383).